A 338-amino-acid chain; its full sequence is Methionine import ATP-binding protein MetN 2 (338 aa).

In terms of domain architecture, ABC transporter spans 2-242 (IEIEKVCVDF…PQHAFTQQLV (241 aa)). 39–46 (GTSGAGKS) serves as a coordination point for ATP.

It belongs to the ABC transporter superfamily. Methionine importer (TC 3.A.1.24) family. In terms of assembly, the complex is composed of two ATP-binding proteins (MetN), two transmembrane proteins (MetI) and a solute-binding protein (MetQ).

It localises to the cell inner membrane. The enzyme catalyses L-methionine(out) + ATP + H2O = L-methionine(in) + ADP + phosphate + H(+). It catalyses the reaction D-methionine(out) + ATP + H2O = D-methionine(in) + ADP + phosphate + H(+). Part of the ABC transporter complex MetNIQ involved in methionine import. Responsible for energy coupling to the transport system. The chain is Methionine import ATP-binding protein MetN 2 from Salmonella paratyphi A (strain ATCC 9150 / SARB42).